Reading from the N-terminus, the 408-residue chain is Histidine--tRNA ligase (408 aa).

Belongs to the class-II aminoacyl-tRNA synthetase family. As to quaternary structure, homodimer.

It localises to the cytoplasm. The catalysed reaction is tRNA(His) + L-histidine + ATP = L-histidyl-tRNA(His) + AMP + diphosphate + H(+). The chain is Histidine--tRNA ligase from Wolbachia pipientis wMel.